A 239-amino-acid polypeptide reads, in one-letter code: ATP-dependent dethiobiotin synthetase BioD (239 aa).

Residue glutamate 15–phenylalanine 20 participates in ATP binding. A Mg(2+)-binding site is contributed by threonine 19. Lysine 40 is a catalytic residue. ATP-binding positions include aspartate 57, glutamate 118 to glycine 121, and asparagine 178 to histidine 179. Mg(2+) contacts are provided by aspartate 57 and glutamate 118.

Belongs to the dethiobiotin synthetase family. As to quaternary structure, homodimer. Mg(2+) is required as a cofactor.

The protein localises to the cytoplasm. The enzyme catalyses (7R,8S)-7,8-diammoniononanoate + CO2 + ATP = (4R,5S)-dethiobiotin + ADP + phosphate + 3 H(+). The protein operates within cofactor biosynthesis; biotin biosynthesis; biotin from 7,8-diaminononanoate: step 1/2. In terms of biological role, catalyzes a mechanistically unusual reaction, the ATP-dependent insertion of CO2 between the N7 and N8 nitrogen atoms of 7,8-diaminopelargonic acid (DAPA, also called 7,8-diammoniononanoate) to form a ureido ring. The polypeptide is ATP-dependent dethiobiotin synthetase BioD (Burkholderia multivorans (strain ATCC 17616 / 249)).